The chain runs to 107 residues: Anti-adapter protein IraM (107 aa).

Belongs to the IraM/RssC family.

The protein localises to the cytoplasm. Inhibits RpoS proteolysis by regulating RssB activity, thereby increasing the stability of the sigma stress factor RpoS during magnesium starvation. The sequence is that of Anti-adapter protein IraM from Shigella dysenteriae serotype 1 (strain Sd197).